Reading from the N-terminus, the 1056-residue chain is Pleckstrin homology domain-containing family M member 1 (1056 aa).

The region spanning Thr-41–Ala-183 is the RUN domain. 3 disordered regions span residues Gln-215–Gln-245, Gly-277–Asp-303, and Pro-360–Asp-422. Ser-219 bears the Phosphoserine mark. Polar residues predominate over residues Pro-389–Glu-404. Phosphoserine is present on residues Ser-432 and Ser-435. Residues Ser-451 to Gln-483 form a disordered region. Ser-490 carries the post-translational modification Phosphoserine. Residues Gly-534–Gln-625 enclose the PH 1 domain. The LIR motif lies at Glu-632 to Val-638. The segment at Cys-654–Ala-1056 is interaction with RAB7A. One can recognise a PH 2 domain in the interval Asp-683–Ala-777. The Phorbol-ester/DAG-type zinc-finger motif lies at Gln-986–Cys-1040.

As to quaternary structure, interacts (via N- and C-terminus) with RAB7A (GTP-bound form). Simultaneously interacts with RAB7A and ARL8B; bringing about clustering and fusion of late endosomes and lysosomes. Interacts (via RUN domain) with ARL8B (GTP-bound form); the interaction is required for PLEKHM1 localization to lysosomes and for ARL8B function in delivery and degradation of endocytic and autophagic cargo in lysosomes. PLEKHM1 and PLEKHM2 compete for interaction with ARL8B. Interacts with ARL8A; the interaction is weaker than with ARL8B. Interacts with VPS41, VPS11, VPS18, VPS33A and VPS39; indicative for an association with the HOPS complex; the interactions with, at least, VPS41, VPS11, VPS18 and VPS33A require ARL8B. Interacts with GABARAP, GABARAPL, GABARAPL2, MAP1LC3A, MAP1LC3B and MAP1LC3C. Interacts with PAFAH1B. Interacts (via N- and C-terminus) with NDEL1. Interacts (via C-terminus) with MAP3K7. Interacts (via N- and C-terminus) with FAM98A. Interacts (via C-terminus) with DEF8; this interaction is weak but increased in a RAB7A-dependent manner. In colon carcinoma and breast carcinoma cells, it interacts with sialyl-lex-positive protein. (Microbial infection) Interacts with Salmonella typhimurium sifA. In terms of tissue distribution, expressed in placenta, liver, prostate, thymus, spleen, ovary, colon, colon carcinoma and peripheral blood lymphocytes (PBL). Weakly expressed in brain, lung, kidney, and testis. No expression in heart, skeletal muscle, pancreas and small intestine. Predominantly expressed in the breast carcinoma cell line MCF-7.

The protein localises to the autolysosome membrane. The protein resides in the endosome membrane. It is found in the late endosome membrane. Its subcellular location is the lysosome membrane. Acts as a multivalent adapter protein that regulates Rab7-dependent and HOPS complex-dependent fusion events in the endolysosomal system and couples autophagic and the endocytic trafficking pathways. Acts as a dual effector of RAB7A and ARL8B that simultaneously binds these GTPases, bringing about clustering and fusion of late endosomes and lysosomes. Required for late stages of endolysosomal maturation, facilitating both endocytosis-mediated degradation of growth factor receptors and autophagosome clearance. Interaction with Arl8b is a crucial factor in the terminal maturation of autophagosomes and to mediate autophagosome-lysosome fusion. Positively regulates lysosome peripheral distribution and ruffled border formation in osteoclasts. May be involved in negative regulation of endocytic transport from early endosome to late endosome/lysosome implicating its association with Rab7. May have a role in sialyl-lex-mediated transduction of apoptotic signals. Involved in bone resorption. Its function is as follows. (Microbial infection) In case of infection contributes to Salmonella typhimurium pathogenesis by supporting the integrity of the Salmonella-containing vacuole (SCV) probably in concert with the HOPS complex and Rab7. In Homo sapiens (Human), this protein is Pleckstrin homology domain-containing family M member 1.